The sequence spans 136 residues: Glutamyl-tRNA(Gln) amidotransferase subunit C, mitochondrial (136 aa).

It belongs to the GatC family. As to quaternary structure, subunit of the heterotrimeric GatCAB amidotransferase (AdT) complex, composed of A (QRSL1), B (GATB) and C (GATC) subunits.

Its subcellular location is the mitochondrion. It catalyses the reaction L-glutamyl-tRNA(Gln) + L-glutamine + ATP + H2O = L-glutaminyl-tRNA(Gln) + L-glutamate + ADP + phosphate + H(+). In terms of biological role, allows the formation of correctly charged Gln-tRNA(Gln) through the transamidation of misacylated Glu-tRNA(Gln) in the mitochondria. The reaction takes place in the presence of glutamine and ATP through an activated gamma-phospho-Glu-tRNA(Gln). This Homo sapiens (Human) protein is Glutamyl-tRNA(Gln) amidotransferase subunit C, mitochondrial.